We begin with the raw amino-acid sequence, 224 residues long: UPF0758 protein VF_0126 (224 aa).

An MPN domain is found at 102–224 (ALTSPEHTKR…IVSFAERGWI (123 aa)). The Zn(2+) site is built by His-173, His-175, and Asp-186. The short motif at 173 to 186 (HNHPSGVAEPSQAD) is the JAMM motif element.

It belongs to the UPF0758 family.

This chain is UPF0758 protein VF_0126, found in Aliivibrio fischeri (strain ATCC 700601 / ES114) (Vibrio fischeri).